The following is a 206-amino-acid chain: MALKYKLILASGSPRRVDLLNQAGIEPSRLMPMDIDEAPKKSEHPRSLARRLSAEKAEAALAAIKGDITWKGSYILSADTVVAVGRRILGKAEFADEALNSLHLLSGRNHMVYTGVCLVTPDRKVRQKIVETKVRFKRLSGFEIENYLASGQWRGKAGAYGIQGLAGTFVQKMVGSYTNVVGLPLYETILLLTGEGFDVHSRWPEG.

The active-site Proton acceptor is the D79.

It belongs to the Maf family. YhdE subfamily. A divalent metal cation is required as a cofactor.

The protein resides in the cytoplasm. The enzyme catalyses dTTP + H2O = dTMP + diphosphate + H(+). It catalyses the reaction UTP + H2O = UMP + diphosphate + H(+). Functionally, nucleoside triphosphate pyrophosphatase that hydrolyzes dTTP and UTP. May have a dual role in cell division arrest and in preventing the incorporation of modified nucleotides into cellular nucleic acids. The polypeptide is dTTP/UTP pyrophosphatase (Rhizobium johnstonii (strain DSM 114642 / LMG 32736 / 3841) (Rhizobium leguminosarum bv. viciae)).